A 388-amino-acid polypeptide reads, in one-letter code: tRNA (guanine-N(7)-)-methyltransferase (388 aa).

Glu-129, Glu-154, and Asp-181 together coordinate S-adenosyl-L-methionine. Substrate is bound by residues Lys-207 and Asp-237.

Belongs to the class I-like SAM-binding methyltransferase superfamily. TrmB family.

It catalyses the reaction guanosine(46) in tRNA + S-adenosyl-L-methionine = N(7)-methylguanosine(46) in tRNA + S-adenosyl-L-homocysteine. Its pathway is tRNA modification; N(7)-methylguanine-tRNA biosynthesis. Catalyzes the formation of N(7)-methylguanine at position 46 (m7G46) in tRNA. This chain is tRNA (guanine-N(7)-)-methyltransferase, found in Wolinella succinogenes (strain ATCC 29543 / DSM 1740 / CCUG 13145 / JCM 31913 / LMG 7466 / NCTC 11488 / FDC 602W) (Vibrio succinogenes).